The primary structure comprises 575 residues: Proline--tRNA ligase (575 aa).

It belongs to the class-II aminoacyl-tRNA synthetase family. ProS type 1 subfamily. As to quaternary structure, homodimer.

The protein localises to the cytoplasm. The catalysed reaction is tRNA(Pro) + L-proline + ATP = L-prolyl-tRNA(Pro) + AMP + diphosphate. Functionally, catalyzes the attachment of proline to tRNA(Pro) in a two-step reaction: proline is first activated by ATP to form Pro-AMP and then transferred to the acceptor end of tRNA(Pro). As ProRS can inadvertently accommodate and process non-cognate amino acids such as alanine and cysteine, to avoid such errors it has two additional distinct editing activities against alanine. One activity is designated as 'pretransfer' editing and involves the tRNA(Pro)-independent hydrolysis of activated Ala-AMP. The other activity is designated 'posttransfer' editing and involves deacylation of mischarged Ala-tRNA(Pro). The misacylated Cys-tRNA(Pro) is not edited by ProRS. This Desulfitobacterium hafniense (strain DSM 10664 / DCB-2) protein is Proline--tRNA ligase.